Here is a 108-residue protein sequence, read N- to C-terminus: E3 ubiquitin-protein ligase Midline-1 (108 aa).

Residues 1–100 (KSAPKHEWIG…IITGLPIPDH (100 aa)) enclose the B30.2/SPRY domain.

The protein belongs to the TRIM/RBCC family. Homodimer or heterodimer with MID2. Interacts with IGBP1.

The protein localises to the cytoplasm. The protein resides in the cytoskeleton. The enzyme catalyses S-ubiquitinyl-[E2 ubiquitin-conjugating enzyme]-L-cysteine + [acceptor protein]-L-lysine = [E2 ubiquitin-conjugating enzyme]-L-cysteine + N(6)-ubiquitinyl-[acceptor protein]-L-lysine.. Has E3 ubiquitin ligase activity towards IGBP1, promoting its monoubiquitination, which results in deprotection of the catalytic subunit of protein phosphatase PP2A, and its subsequent degradation by polyubiquitination. The sequence is that of E3 ubiquitin-protein ligase Midline-1 (Mid1) from Mus caroli (Ryukyu mouse).